Consider the following 199-residue polypeptide: Imidazoleglycerol-phosphate dehydratase (199 aa).

Belongs to the imidazoleglycerol-phosphate dehydratase family.

It is found in the cytoplasm. The catalysed reaction is D-erythro-1-(imidazol-4-yl)glycerol 3-phosphate = 3-(imidazol-4-yl)-2-oxopropyl phosphate + H2O. The protein operates within amino-acid biosynthesis; L-histidine biosynthesis; L-histidine from 5-phospho-alpha-D-ribose 1-diphosphate: step 6/9. This is Imidazoleglycerol-phosphate dehydratase from Lactococcus lactis subsp. cremoris (strain MG1363).